Consider the following 79-residue polypeptide: UPF0154 protein lwe1321 (79 aa).

The chain crosses the membrane as a helical span at residues 2–22 (WIYILVGIICLLAGLAGGFFI). Positions 57 to 66 (KINQMMSAMN) are enriched in polar residues. Residues 57–79 (KINQMMSAMNKQQEKEKPKKAKK) form a disordered region.

The protein belongs to the UPF0154 family.

The protein resides in the cell membrane. This chain is UPF0154 protein lwe1321, found in Listeria welshimeri serovar 6b (strain ATCC 35897 / DSM 20650 / CCUG 15529 / CIP 8149 / NCTC 11857 / SLCC 5334 / V8).